A 96-amino-acid polypeptide reads, in one-letter code: Co-chaperonin GroES (96 aa).

Belongs to the GroES chaperonin family. In terms of assembly, heptamer of 7 subunits arranged in a ring. Interacts with the chaperonin GroEL.

The protein resides in the cytoplasm. In terms of biological role, together with the chaperonin GroEL, plays an essential role in assisting protein folding. The GroEL-GroES system forms a nano-cage that allows encapsulation of the non-native substrate proteins and provides a physical environment optimized to promote and accelerate protein folding. GroES binds to the apical surface of the GroEL ring, thereby capping the opening of the GroEL channel. This Haemophilus influenzae (strain 86-028NP) protein is Co-chaperonin GroES.